Consider the following 364-residue polypeptide: Eukaryotic translation initiation factor 3 subunit H (364 aa).

The MPN domain maps to 13 to 162; it reads VQVDALVAIK…LRAYRLSPSF (150 aa).

The protein belongs to the eIF-3 subunit H family. In terms of assembly, component of the eukaryotic translation initiation factor 3 (eIF-3) complex.

It is found in the cytoplasm. Its function is as follows. Component of the eukaryotic translation initiation factor 3 (eIF-3) complex, which is involved in protein synthesis of a specialized repertoire of mRNAs and, together with other initiation factors, stimulates binding of mRNA and methionyl-tRNAi to the 40S ribosome. The eIF-3 complex specifically targets and initiates translation of a subset of mRNAs involved in cell proliferation. This is Eukaryotic translation initiation factor 3 subunit H from Phaeosphaeria nodorum (strain SN15 / ATCC MYA-4574 / FGSC 10173) (Glume blotch fungus).